Consider the following 295-residue polypeptide: Ribosomal protein L11 methyltransferase (295 aa).

The S-adenosyl-L-methionine site is built by T138, G161, D183, and N230.

The protein belongs to the methyltransferase superfamily. PrmA family.

The protein resides in the cytoplasm. The catalysed reaction is L-lysyl-[protein] + 3 S-adenosyl-L-methionine = N(6),N(6),N(6)-trimethyl-L-lysyl-[protein] + 3 S-adenosyl-L-homocysteine + 3 H(+). Its function is as follows. Methylates ribosomal protein L11. The polypeptide is Ribosomal protein L11 methyltransferase (Bradyrhizobium diazoefficiens (strain JCM 10833 / BCRC 13528 / IAM 13628 / NBRC 14792 / USDA 110)).